The sequence spans 133 residues: S-adenosylmethionine decarboxylase proenzyme (133 aa).

Ser-64 functions as the Schiff-base intermediate with substrate; via pyruvic acid in the catalytic mechanism. Ser-64 carries the pyruvic acid (Ser); by autocatalysis modification. His-69 serves as the catalytic Proton acceptor; for processing activity. The Proton donor; for catalytic activity role is filled by Cys-84.

The protein belongs to the prokaryotic AdoMetDC family. Type 1 subfamily. As to quaternary structure, heterotetramer of two alpha and two beta chains arranged as a dimer of alpha/beta heterodimers. It depends on pyruvate as a cofactor. Is synthesized initially as an inactive proenzyme. Formation of the active enzyme involves a self-maturation process in which the active site pyruvoyl group is generated from an internal serine residue via an autocatalytic post-translational modification. Two non-identical subunits are generated from the proenzyme in this reaction, and the pyruvate is formed at the N-terminus of the alpha chain, which is derived from the carboxyl end of the proenzyme. The post-translation cleavage follows an unusual pathway, termed non-hydrolytic serinolysis, in which the side chain hydroxyl group of the serine supplies its oxygen atom to form the C-terminus of the beta chain, while the remainder of the serine residue undergoes an oxidative deamination to produce ammonia and the pyruvoyl group blocking the N-terminus of the alpha chain.

It catalyses the reaction S-adenosyl-L-methionine + H(+) = S-adenosyl 3-(methylsulfanyl)propylamine + CO2. It functions in the pathway amine and polyamine biosynthesis; S-adenosylmethioninamine biosynthesis; S-adenosylmethioninamine from S-adenosyl-L-methionine: step 1/1. Functionally, catalyzes the decarboxylation of S-adenosylmethionine to S-adenosylmethioninamine (dcAdoMet), the propylamine donor required for the synthesis of the polyamines spermine and spermidine from the diamine putrescine. This Persephonella marina (strain DSM 14350 / EX-H1) protein is S-adenosylmethionine decarboxylase proenzyme.